Consider the following 272-residue polypeptide: 3-methyl-2-oxobutanoate hydroxymethyltransferase (272 aa).

The Mg(2+) site is built by aspartate 42 and aspartate 86. Residues 42 to 43 (DS), aspartate 86, and lysine 116 each bind 3-methyl-2-oxobutanoate. Position 118 (glutamate 118) interacts with Mg(2+). The active-site Proton acceptor is glutamate 185. Residues 251–272 (LKEQRDQRATPTTPPPPPAPDC) form a disordered region. Pro residues predominate over residues 262-272 (TTPPPPPAPDC).

The protein belongs to the PanB family. Homodecamer; pentamer of dimers. Mg(2+) is required as a cofactor.

Its subcellular location is the cytoplasm. The enzyme catalyses 3-methyl-2-oxobutanoate + (6R)-5,10-methylene-5,6,7,8-tetrahydrofolate + H2O = 2-dehydropantoate + (6S)-5,6,7,8-tetrahydrofolate. Its pathway is cofactor biosynthesis; (R)-pantothenate biosynthesis; (R)-pantoate from 3-methyl-2-oxobutanoate: step 1/2. In terms of biological role, catalyzes the reversible reaction in which hydroxymethyl group from 5,10-methylenetetrahydrofolate is transferred onto alpha-ketoisovalerate to form ketopantoate. The chain is 3-methyl-2-oxobutanoate hydroxymethyltransferase from Synechococcus sp. (strain CC9311).